The primary structure comprises 292 residues: 5,10-methylenetetrahydrofolate reductase (292 aa).

Glu-26 acts as the Proton donor/acceptor in catalysis. Thr-57 provides a ligand contact to NADH. Residues Tyr-58, Ala-60, His-86, Arg-116, Gly-117, Asp-118, Ala-130, Tyr-150, His-154, Ala-157, Asp-163, Asn-166, Arg-169, and Lys-170 each contribute to the FAD site. Residue Asp-118 participates in (6S)-5-methyl-5,6,7,8-tetrahydrofolate binding. An NADH-binding site is contributed by Gln-181. (6S)-5-methyl-5,6,7,8-tetrahydrofolate contacts are provided by Gln-181, Gln-217, and Arg-277.

The protein belongs to the methylenetetrahydrofolate reductase family. The cofactor is FAD.

The enzyme catalyses (6S)-5-methyl-5,6,7,8-tetrahydrofolate + NAD(+) = (6R)-5,10-methylene-5,6,7,8-tetrahydrofolate + NADH + H(+). It participates in one-carbon metabolism; tetrahydrofolate interconversion. The protein operates within amino-acid biosynthesis; L-methionine biosynthesis via de novo pathway. Functionally, catalyzes the NADH-dependent reduction of 5,10-methylenetetrahydrofolate to 5-methyltetrahydrofolate. Is required to provide the methyl group necessary for methionine synthetase to convert homocysteine to methionine; the methyl group is given by 5-methyltetrahydrofolate. The protein is 5,10-methylenetetrahydrofolate reductase (metF) of Neisseria meningitidis serogroup B (strain ATCC BAA-335 / MC58).